The chain runs to 257 residues: Receptor expression-enhancing protein 4 (257 aa).

2 helical membrane passes run 1–21 (MVSW…YPAY) and 42–62 (WIVF…ISWF). 2 positions are modified to phosphoserine: S152 and S194. The interval 177-257 (VPRRRPPIGY…KKAMPSDMDS (81 aa)) is disordered. Position 196 is a phosphothreonine (T196). Phosphoserine is present on residues S202 and S253.

The protein belongs to the DP1 family.

The protein localises to the endoplasmic reticulum membrane. Functionally, microtubule-binding protein required to ensure proper cell division and nuclear envelope reassembly by sequestering the endoplasmic reticulum away from chromosomes during mitosis. Probably acts by clearing the endoplasmic reticulum membrane from metaphase chromosomes. The polypeptide is Receptor expression-enhancing protein 4 (Reep4) (Mus musculus (Mouse)).